A 589-amino-acid chain; its full sequence is Aspartate--tRNA ligase (589 aa).

E171 is a binding site for L-aspartate. The aspartate stretch occupies residues 195–198 (QLFK). R217 is an L-aspartate binding site. ATP-binding positions include 217–219 (RDE) and Q226. Position 448 (H448) interacts with L-aspartate. Residue E482 coordinates ATP. An L-aspartate-binding site is contributed by R489. 534–537 (GLDR) is an ATP binding site.

Belongs to the class-II aminoacyl-tRNA synthetase family. Type 1 subfamily. Homodimer.

Its subcellular location is the cytoplasm. The catalysed reaction is tRNA(Asp) + L-aspartate + ATP = L-aspartyl-tRNA(Asp) + AMP + diphosphate. Catalyzes the attachment of L-aspartate to tRNA(Asp) in a two-step reaction: L-aspartate is first activated by ATP to form Asp-AMP and then transferred to the acceptor end of tRNA(Asp). This Idiomarina loihiensis (strain ATCC BAA-735 / DSM 15497 / L2-TR) protein is Aspartate--tRNA ligase.